The chain runs to 31 residues: Spectrin beta chain, non-erythrocytic 1 (31 aa).

Spectrin repeat units lie at residues 1–10, 11–19, and 20–31; these read VLLLSQDYGK, YKEVAELTR, and TQILAASYELHK. Tyr27 is subject to Phosphotyrosine.

It belongs to the spectrin family. As to quaternary structure, interacts with ANK2. Interacts with CPNE4 (via VWFA domain). Like erythrocyte spectrin, the spectrin-like proteins are capable to form dimers which can further associate to tetramers. Associates with the gamma-tubulin complex in brain, but not in kidney, liver, sperm, or uterus. Interacts with CAMSAP1. Can form heterodimers with SPTAN1.

It is found in the cytoplasm. It localises to the cytoskeleton. The protein localises to the myofibril. Its subcellular location is the sarcomere. The protein resides in the m line. It is found in the cytosol. It localises to the cell membrane. In terms of biological role, fodrin, which seems to be involved in secretion, interacts with calmodulin in a calcium-dependent manner and is thus candidate for the calcium-dependent movement of the cytoskeleton at the membrane. Plays a critical role in central nervous system development and function. This is Spectrin beta chain, non-erythrocytic 1 (SPTBN1) from Capra hircus (Goat).